The sequence spans 357 residues: Phosphoribosylformylglycinamidine cyclo-ligase (357 aa).

This sequence belongs to the AIR synthase family.

It localises to the cytoplasm. The enzyme catalyses 2-formamido-N(1)-(5-O-phospho-beta-D-ribosyl)acetamidine + ATP = 5-amino-1-(5-phospho-beta-D-ribosyl)imidazole + ADP + phosphate + H(+). It functions in the pathway purine metabolism; IMP biosynthesis via de novo pathway; 5-amino-1-(5-phospho-D-ribosyl)imidazole from N(2)-formyl-N(1)-(5-phospho-D-ribosyl)glycinamide: step 2/2. The polypeptide is Phosphoribosylformylglycinamidine cyclo-ligase (Rhizobium leguminosarum bv. trifolii (strain WSM2304)).